A 1464-amino-acid chain; its full sequence is DNA polymerase III PolC-type (1464 aa).

The region spanning 426–582 is the Exonuclease domain; sequence YVVFDVETTG…YDAEATGRLL (157 aa).

It belongs to the DNA polymerase type-C family. PolC subfamily.

Its subcellular location is the cytoplasm. It catalyses the reaction DNA(n) + a 2'-deoxyribonucleoside 5'-triphosphate = DNA(n+1) + diphosphate. In terms of biological role, required for replicative DNA synthesis. This DNA polymerase also exhibits 3' to 5' exonuclease activity. This Streptococcus thermophilus (strain ATCC BAA-250 / LMG 18311) protein is DNA polymerase III PolC-type.